Here is a 288-residue protein sequence, read N- to C-terminus: ATP synthase gamma chain (288 aa).

Belongs to the ATPase gamma chain family. In terms of assembly, F-type ATPases have 2 components, CF(1) - the catalytic core - and CF(0) - the membrane proton channel. CF(1) has five subunits: alpha(3), beta(3), gamma(1), delta(1), epsilon(1). CF(0) has three main subunits: a, b and c.

The protein localises to the cell inner membrane. Produces ATP from ADP in the presence of a proton gradient across the membrane. The gamma chain is believed to be important in regulating ATPase activity and the flow of protons through the CF(0) complex. The chain is ATP synthase gamma chain from Actinobacillus pleuropneumoniae serotype 5b (strain L20).